The following is a 99-amino-acid chain: Protein Frey (99 aa).

The chain crosses the membrane as a helical span at residues 10-29 (YPRAGLSLFLFYLILAGALL). The segment at 60–90 (DYGLRPKHPRPGGPRPLLSQAQQRKRDGPNM) is disordered.

Interacts with SPPL2C (via active sites); the interaction stabilizes FREY1 protein and inhibits SPPL2C proteolytic activity. Interacts with IZUMO1; the interaction retains IZUMO1 at the endoplasmic reticulum membrane and coordinates IZUMO1 complex assembly. As to expression, expressed in round spermatids (at protein level).

The protein localises to the endoplasmic reticulum membrane. In terms of biological role, key regulator for male fertility expressed transiently in round spermatids where it recruits IZUMO1 at the endoplasmic reticulum (ER) membrane and coordinates the oolemmal binding multimeric complex (IZUMO1 complex) assembly. Upon complete assembly of the IZUMO1 complex, its ER retention is released, facilitating IZUMO1 complex export to the acrosome. Through the interaction with SPPL2C, inhibits its intramembrane protease activity directly accessing the catalytic center of an I-CLiP. The sequence is that of Protein Frey from Mus musculus (Mouse).